Consider the following 410-residue polypeptide: Peptidase T (410 aa).

His78 contacts Zn(2+). Asp80 is a catalytic residue. Asp140 is a binding site for Zn(2+). Catalysis depends on Glu174, which acts as the Proton acceptor. Glu175, Asp197, and His379 together coordinate Zn(2+).

It belongs to the peptidase M20B family. Zn(2+) serves as cofactor.

Its subcellular location is the cytoplasm. The enzyme catalyses Release of the N-terminal residue from a tripeptide.. Its function is as follows. Cleaves the N-terminal amino acid of tripeptides. The protein is Peptidase T of Vibrio cholerae serotype O1 (strain ATCC 39315 / El Tor Inaba N16961).